A 198-amino-acid polypeptide reads, in one-letter code: Segregation and condensation protein B (198 aa).

The segment at 167–198 (PKLADPEADDPDQNEMDLFFDRFNQSKEQEEE) is disordered. A compositionally biased stretch (acidic residues) spans 172–181 (PEADDPDQNE).

It belongs to the ScpB family. As to quaternary structure, homodimer. Homodimerization may be required to stabilize the binding of ScpA to the Smc head domains. Component of a cohesin-like complex composed of ScpA, ScpB and the Smc homodimer, in which ScpA and ScpB bind to the head domain of Smc. The presence of the three proteins is required for the association of the complex with DNA.

The protein resides in the cytoplasm. Participates in chromosomal partition during cell division. May act via the formation of a condensin-like complex containing Smc and ScpA that pull DNA away from mid-cell into both cell halves. In Listeria welshimeri serovar 6b (strain ATCC 35897 / DSM 20650 / CCUG 15529 / CIP 8149 / NCTC 11857 / SLCC 5334 / V8), this protein is Segregation and condensation protein B.